Reading from the N-terminus, the 339-residue chain is DNA-directed RNA polymerase subunit alpha (339 aa).

Residues 1–233 (MVREEVAGST…DLFLPFLHAE (233 aa)) are alpha N-terminal domain (alpha-NTD). Positions 264–339 (KKGIPLNCIF…IDLLKNKLSF (76 aa)) are alpha C-terminal domain (alpha-CTD).

This sequence belongs to the RNA polymerase alpha chain family. As to quaternary structure, in plastids the minimal PEP RNA polymerase catalytic core is composed of four subunits: alpha, beta, beta', and beta''. When a (nuclear-encoded) sigma factor is associated with the core the holoenzyme is formed, which can initiate transcription.

The protein resides in the plastid. The protein localises to the chloroplast. It carries out the reaction RNA(n) + a ribonucleoside 5'-triphosphate = RNA(n+1) + diphosphate. Functionally, DNA-dependent RNA polymerase catalyzes the transcription of DNA into RNA using the four ribonucleoside triphosphates as substrates. This Secale strictum (Mountain rye) protein is DNA-directed RNA polymerase subunit alpha.